We begin with the raw amino-acid sequence, 238 residues long: Uridylate kinase (238 aa).

12–15 (KLSG) is an ATP binding site. Gly54 contacts UMP. Residues Gly55 and Arg59 each coordinate ATP. UMP contacts are provided by residues Asp74 and 135-142 (TGNPYFTT). 3 residues coordinate ATP: Thr162, Tyr168, and Asp171.

The protein belongs to the UMP kinase family. Homohexamer.

Its subcellular location is the cytoplasm. The catalysed reaction is UMP + ATP = UDP + ADP. The protein operates within pyrimidine metabolism; CTP biosynthesis via de novo pathway; UDP from UMP (UMPK route): step 1/1. Its activity is regulated as follows. Inhibited by UTP. Its function is as follows. Catalyzes the reversible phosphorylation of UMP to UDP. The chain is Uridylate kinase from Nitratidesulfovibrio vulgaris (strain ATCC 29579 / DSM 644 / CCUG 34227 / NCIMB 8303 / VKM B-1760 / Hildenborough) (Desulfovibrio vulgaris).